The primary structure comprises 367 residues: tRNA(Ile)-lysidine synthase (367 aa).

An ATP-binding site is contributed by 32-37 (SGGSDS).

This sequence belongs to the tRNA(Ile)-lysidine synthase family.

The protein localises to the cytoplasm. It catalyses the reaction cytidine(34) in tRNA(Ile2) + L-lysine + ATP = lysidine(34) in tRNA(Ile2) + AMP + diphosphate + H(+). In terms of biological role, ligates lysine onto the cytidine present at position 34 of the AUA codon-specific tRNA(Ile) that contains the anticodon CAU, in an ATP-dependent manner. Cytidine is converted to lysidine, thus changing the amino acid specificity of the tRNA from methionine to isoleucine. The protein is tRNA(Ile)-lysidine synthase of Hyphomonas neptunium (strain ATCC 15444).